The sequence spans 471 residues: Mitochondrial distribution and morphology protein 10 (471 aa).

The tract at residues 313-338 (SNSAATPPRIKNSDSQVLSNNSTDSK) is disordered. Residues 325–338 (SDSQVLSNNSTDSK) are compositionally biased toward polar residues.

It belongs to the MDM10 family. Component of the ER-mitochondria encounter structure (ERMES) or MDM complex, composed of MMM1, MDM10, MDM12 and MDM34. Associates with the mitochondrial outer membrane sorting assembly machinery SAM(core) complex.

Its subcellular location is the mitochondrion outer membrane. Its function is as follows. Component of the ERMES/MDM complex, which serves as a molecular tether to connect the endoplasmic reticulum and mitochondria. Components of this complex are involved in the control of mitochondrial shape and protein biogenesis and may function in phospholipid exchange. MDM10 is involved in the late assembly steps of the general translocase of the mitochondrial outer membrane (TOM complex). Functions in the TOM40-specific route of the assembly of outer membrane beta-barrel proteins, including the association of TOM40 with the receptor TOM22 and small TOM proteins. Can associate with the SAM(core) complex as well as the MDM12-MMM1 complex, both involved in late steps of the major beta-barrel assembly pathway, that is responsible for biogenesis of all outer membrane beta-barrel proteins. May act as a switch that shuttles between both complexes and channels precursor proteins into the TOM40-specific pathway. Plays a role in mitochondrial morphology and in the inheritance of mitochondria. The polypeptide is Mitochondrial distribution and morphology protein 10 (Debaryomyces hansenii (strain ATCC 36239 / CBS 767 / BCRC 21394 / JCM 1990 / NBRC 0083 / IGC 2968) (Yeast)).